Consider the following 198-residue polypeptide: Golgi to ER traffic protein 1 (198 aa).

At 1–6 (MDPFSI) the chain is on the lumenal side. A helical transmembrane segment spans residues 7-26 (LLTLTLIILAQNAVRIVGKS). At 27 to 110 (QIHQSIWNLY…AIEKYLGLAI (84 aa)) the chain is on the cytoplasmic side. Residues 73 to 106 (KWTKLNRKYDQLQTEIKAVSDQVSQQQQAIEKYL) adopt a coiled-coil conformation. A helical transmembrane segment spans residues 111 to 131 (SVTTTLPLWLFRFKYRKQPLF). Residues 132–155 (YFPKDTFPSYLEWILSFPSVPQGS) are Lumenal-facing. A helical membrane pass occupies residues 156-172 (IGIMFWILLLNKFVSNL). At 173 to 198 (EFIVKTFSTKVEKPVPIVKVEDLSPK) the chain is on the cytoplasmic side.

This sequence belongs to the WRB/GET1 family. As to quaternary structure, component of the Golgi to ER traffic (GET) complex, which is composed of GET1, GET2 and GET3. Within the complex, GET1 and GET2 form a heterotetramer which is stabilized by phosphatidylinositol binding and which binds to the GET3 homodimer.

The protein localises to the endoplasmic reticulum membrane. It is found in the golgi apparatus membrane. Its function is as follows. Required for the post-translational delivery of tail-anchored (TA) proteins to the endoplasmic reticulum. Together with GET2, acts as a membrane receptor for soluble GET3, which recognizes and selectively binds the transmembrane domain of TA proteins in the cytosol. The GET complex cooperates with the HDEL receptor ERD2 to mediate the ATP-dependent retrieval of resident ER proteins that contain a C-terminal H-D-E-L retention signal from the Golgi to the ER. The sequence is that of Golgi to ER traffic protein 1 from Komagataella phaffii (strain GS115 / ATCC 20864) (Yeast).